The following is a 535-amino-acid chain: Succinate-semialdehyde dehydrogenase, mitochondrial (535 aa).

Residues 1–47 (MATCIWLRSCGARRLGSTFPGCRLRPRAGGLVPASGPAPGPAQLRCY) constitute a mitochondrion transit peptide. Lys-126 is subject to N6-acetyllysine; alternate. Lys-126 bears the N6-succinyllysine; alternate mark. An N6-succinyllysine mark is found at Lys-135 and Lys-184. NAD(+) contacts are provided by residues Arg-213 and 228 to 231 (KPAE). Arg-213 contributes to the substrate binding site. Lys-265 bears the N6-acetyllysine; alternate mark. Lys-265 carries the post-translational modification N6-succinyllysine; alternate. Position 284-289 (284-289 (GSTTTG)) interacts with NAD(+). Residue Glu-306 is the Proton acceptor of the active site. Arg-334 provides a ligand contact to substrate. Cys-340 (nucleophile) is an active-site residue. A disulfide bridge connects residues Cys-340 and Cys-342. Residue Lys-365 is modified to N6-acetyllysine. Lys-402 carries the N6-succinyllysine modification. Position 411 is an N6-acetyllysine (Lys-411). Ser-498 is a substrate binding site. Ser-499 is subject to Phosphoserine.

The protein belongs to the aldehyde dehydrogenase family. As to quaternary structure, homotetramer.

The protein resides in the mitochondrion. It carries out the reaction succinate semialdehyde + NAD(+) + H2O = succinate + NADH + 2 H(+). Its pathway is amino-acid degradation; 4-aminobutanoate degradation. With respect to regulation, redox-regulated. Inhibited under oxydizing conditions. Its function is as follows. Catalyzes one step in the degradation of the inhibitory neurotransmitter gamma-aminobutyric acid (GABA). The chain is Succinate-semialdehyde dehydrogenase, mitochondrial (ALDH5A1) from Pan troglodytes (Chimpanzee).